A 192-amino-acid polypeptide reads, in one-letter code: Interferon epsilon (192 aa).

The first 21 residues, M1 to S21, serve as a signal peptide directing secretion. The cysteines at positions 52 and 162 are disulfide-linked.

This sequence belongs to the alpha/beta interferon family. Expressed at very high levels in uterus and, at much lower levels, in ovary and cervix. Very low levels, if any, in other organs. In the endometrium, expressed in the luminal and glandular epithelial cells (at protein level).

It localises to the secreted. Type I interferon required for maintaining basal levels of IFN-regulated genes, including 2'-5'-oligoadenylate synthetase, IRF7 and ISG15, in the female reproductive tract. Directly mediates protection against viral, including HSV-2, and bacterial, including Chlamydia muridarum, genital infections. This Mus musculus (Mouse) protein is Interferon epsilon (Ifne).